The following is a 1616-amino-acid chain: Helicase SWR1 (1616 aa).

The span at 1 to 10 (MARGGSRRRN) shows a compositional bias: basic residues. Disordered stretches follow at residues 1–53 (MARG…IKKE) and 185–238 (KTLE…SDMD). The segment covering 11–26 (TSVISTQKIEPSNEST) has biased composition (polar residues). The segment covering 200 to 209 (PSKTSKGNQK) has biased composition (low complexity). The HSA domain occupies 396-468 (IPKTQGVTIH…KEQNLKRISK (73 aa)). Disordered stretches follow at residues 521-565 (NKSS…VNMD), 583-614 (IDQS…DANK), and 645-774 (LIEK…VPLP). A compositionally biased stretch (acidic residues) spans 529-538 (EVDTENENET). Basic and acidic residues predominate over residues 645–654 (LIEKFSKEDE). Acidic residues predominate over residues 705 to 737 (TEDEEDSNDDVSADSDGNVSDDENMSTTDEEDE). Positions 738 to 751 (PKTPKSSEDPKMDE) are enriched in basic and acidic residues. Positions 752-763 (KENESDVLEEEV) are enriched in acidic residues. The Helicase ATP-binding domain occupies 793–958 (ASLYNNGTNG…WSLLYFLMPS (166 aa)). ATP is bound at residue 806–813 (DEMGLGKT). The short motif at 909–912 (DEAH) is the DEAH box element. Residues 992–1013 (NGTSSDVIDENDKTTQRMDEET) form a disordered region. Basic and acidic residues predominate over residues 1001–1013 (ENDKTTQRMDEET). One can recognise a Helicase C-terminal domain in the interval 1333–1486 (KLQKLATLLQ…NVVIQEGEFT (154 aa)). Residues 1545-1576 (DDEDFDEESKAATNTATPSQTPGPDTAGSGIV) form a disordered region. Residues 1555–1567 (AATNTATPSQTPG) are compositionally biased toward polar residues.

It belongs to the SNF2/RAD54 helicase family. SWR1 subfamily. Component of the SWR1 chromatin-remodeling complex.

The protein resides in the nucleus. It catalyses the reaction ATP + H2O = ADP + phosphate + H(+). Catalytic component of the SWR1 complex which mediates the ATP-dependent exchange of histone H2A for the H2A variant HZT1 leading to transcriptional regulation of selected genes by chromatin remodeling. In Debaryomyces hansenii (strain ATCC 36239 / CBS 767 / BCRC 21394 / JCM 1990 / NBRC 0083 / IGC 2968) (Yeast), this protein is Helicase SWR1 (SWR1).